A 457-amino-acid polypeptide reads, in one-letter code: DNA repair protein RadA (457 aa).

A C4-type zinc finger spans residues 10-27 (CQECGYESAKWMGKCPGC). 97–104 (GDPGIGKS) serves as a coordination point for ATP. A RadA KNRFG motif motif is present at residues 254 to 258 (KNRFG). Residues 353–457 (DAYVNVAGGV…QDALEVTLGR (105 aa)) are lon-protease-like.

The protein belongs to the RecA family. RadA subfamily.

Its function is as follows. DNA-dependent ATPase involved in processing of recombination intermediates, plays a role in repairing DNA breaks. Stimulates the branch migration of RecA-mediated strand transfer reactions, allowing the 3' invading strand to extend heteroduplex DNA faster. Binds ssDNA in the presence of ADP but not other nucleotides, has ATPase activity that is stimulated by ssDNA and various branched DNA structures, but inhibited by SSB. Does not have RecA's homology-searching function. The chain is DNA repair protein RadA from Halalkalibacterium halodurans (strain ATCC BAA-125 / DSM 18197 / FERM 7344 / JCM 9153 / C-125) (Bacillus halodurans).